Here is a 157-residue protein sequence, read N- to C-terminus: Capsid protein (157 aa).

Ser2 carries the post-translational modification N-acetylserine; by host.

Belongs to the virgaviridae capsid protein family.

The protein localises to the virion. Its function is as follows. Capsid protein self-assembles to form rod-shaped virions about 18 nm in diameter with a central canal enclosing the viral genomic RNA. In Brassicaceae (TVCV), this protein is Capsid protein (CP).